Consider the following 82-residue polypeptide: Nuclear protein 1 (82 aa).

Residues 1 to 82 are disordered; the sequence is MATFPPATSA…SERKKRGARR (82 aa). A compositionally biased stretch (acidic residues) spans 17 to 28; the sequence is PEDEDSSLDESD. The short motif at 65 to 82 is the Nuclear localization signal element; the sequence is KLVTKLQNSERKKRGARR.

This sequence belongs to the NUPR family. As to quaternary structure, monomer. Directly interacts with MSL1 and binds MORF4L1, two components of histone acetyltransferase complex; the interaction with MORF4L1 may be mediated by MSL1. Interacts with EP300; this interaction enhances the effect of EP300 on PAX2 transcription factor activity. Interacts with PAXIP1; this interaction prevents PAXIP1 inhibition of PAX2 transcription factor activity. Interacts with COPS5; this interaction allows COPS5-dependent CDKN1B nuclear to cytoplasm translocation. Interacts with RNF2. Interacts with FOXO3; this interaction represses FOXO3 transactivation. Interacts with PTMA; negatively regulates apoptotic process. Interacts with MYOD1, EP300 and DDX5; this interaction coordinates the association of anti-proliferative and pro-myogenic proteins at the myogenin promoter. Interacts with TP53; interaction is stress-dependent. Forms a complex with EP300 and TP53; this complex binds CDKN1A promoter leading to transcriptional induction of CDKN1A. Post-translationally, phosphorylated in vitro by PKA and CK. Phosphorylation promotes DNA-binding activity. In terms of processing, acetylated by EP300 in vitro. In terms of tissue distribution, widely expressed, with high levels in liver, pancreas, prostate, ovary, colon, thyroid, spinal cord, trachea and adrenal gland, moderate levels in heart, placenta, lung, skeletal muscle, kidney, testis, small intestine, stomach and lymph node, and low levels in brain, spleen, thymus and bone marrow. Not detected in peripheral blood leukocytes.

The protein localises to the nucleus. It is found in the cytoplasm. The protein resides in the perinuclear region. Its function is as follows. Transcription regulator that converts stress signals into a program of gene expression that empowers cells with resistance to the stress induced by a change in their microenvironment. Thereby participates in the regulation of many processes namely cell-cycle, apoptosis, autophagy and DNA repair responses. Controls cell cycle progression and protects cells from genotoxic stress induced by doxorubicin through the complex formation with TP53 and EP300 that binds CDKN1A promoter leading to transcriptional induction of CDKN1A. Protects pancreatic cancer cells from stress-induced cell death by binding the RELB promoter and activating its transcription, leading to IER3 transactivation. Negatively regulates apoptosis through interaction with PTMA. Inhibits autophagy-induced apoptosis in cardiac cells through FOXO3 interaction, inducing cytoplasmic translocation of FOXO3 thereby preventing the FOXO3 association with the pro-autophagic BNIP3 promoter. Inhibits cell growth and facilitates programmed cell death by apoptosis after adriamycin-induced DNA damage through transactivation of TP53. Regulates methamphetamine-induced apoptosis and autophagy through DDIT3-mediated endoplasmic reticulum stress pathway. Participates in DNA repair following gamma-irradiation by facilitating DNA access of the transcription machinery through interaction with MSL1 leading to inhibition of histone H4' Lys-16' acetylation (H4K16ac). Coactivator of PAX2 transcription factor activity, both by recruiting EP300 to increase PAX2 transcription factor activity and by binding PAXIP1 to suppress PAXIP1-induced inhibition on PAX2. Positively regulates cell cycle progression through interaction with COPS5 inducing cytoplasmic translocation of CDKN1B leading to the CDKN1B degradation. Coordinates, through its interaction with EP300, the assiociation of MYOD1, EP300 and DDX5 to the MYOG promoter, leading to inhibition of cell-cycle progression and myogenic differentiation promotion. Negatively regulates beta cell proliferation via inhibition of cell-cycle regulatory genes expression through the suppression of their promoter activities. Also required for LHB expression and ovarian maturation. Exacerbates CNS inflammation and demyelination upon cuprizone treatment. In Homo sapiens (Human), this protein is Nuclear protein 1.